A 161-amino-acid polypeptide reads, in one-letter code: Non-specific lipid transfer protein GPI-anchored 24 (161 aa).

A signal peptide spans 1–23 (MAQTTTLILLLATLLVAATTVSG). 4 cysteine pairs are disulfide-bonded: cysteine 42/cysteine 79, cysteine 49/cysteine 63, cysteine 64/cysteine 104, and cysteine 77/cysteine 113. A glycan (N-linked (GlcNAc...) asparagine) is linked at asparagine 92. A lipid anchor (GPI-anchor amidated aspartate) is attached at aspartate 138. Positions 139–161 (AASKLAGTGLVGIVVITIAAMFY) are cleaved as a propeptide — removed in mature form.

It belongs to the plant LTP family.

The protein resides in the cell membrane. Probable lipid transfer protein. The chain is Non-specific lipid transfer protein GPI-anchored 24 from Arabidopsis thaliana (Mouse-ear cress).